Here is a 122-residue protein sequence, read N- to C-terminus: Holo-[acyl-carrier-protein] synthase (122 aa).

2 residues coordinate Mg(2+): aspartate 8 and glutamate 60.

It belongs to the P-Pant transferase superfamily. AcpS family. It depends on Mg(2+) as a cofactor.

It is found in the cytoplasm. The catalysed reaction is apo-[ACP] + CoA = holo-[ACP] + adenosine 3',5'-bisphosphate + H(+). Functionally, transfers the 4'-phosphopantetheine moiety from coenzyme A to a Ser of acyl-carrier-protein. This is Holo-[acyl-carrier-protein] synthase from Anaplasma phagocytophilum (strain HZ).